We begin with the raw amino-acid sequence, 975 residues long: E3 ubiquitin-protein ligase NEDD4-like (975 aa).

A2 carries the N-acetylalanine modification. One can recognise a C2 domain in the interval 4 to 126 (GLGEPVYGLS…TEDPTMERPY (123 aa)). Disordered regions lie at residues 178–202 (DSNDSASQHQEELPPPPLPPGWEEK), 244–272 (AAHRRFRSRRHISEDLEPEPSEGGDVPEP), and 285–312 (DSLGLALPPPPASPGSRTSPQELSEELS). Residues 193 to 226 (PPLPPGWEEKVDNLGRTYYVNHNNRTTQWHRPSL) enclose the WW 1 domain. A Phosphoserine modification is found at S312. T318 carries the post-translational modification Phosphothreonine. The residue at position 342 (S342) is a Phosphoserine; by WNK1 and WNK4. Disordered regions lie at residues 349–393 (EQGH…GWEE) and 424–496 (GASG…KVTQ). T367 bears the Phosphothreonine; by SGK1 mark. The region spanning 385-418 (PGLPSGWEERKDAKGRTYYVNHNNRTTTWTRPIM) is the WW 2 domain. Phosphoserine is present on S446. The residue at position 448 (S448) is a Phosphoserine; by PKA and SGK1. Position 449 is a phosphoserine; by WNK1 and WNK4 (S449). A compositionally biased stretch (basic and acidic residues) spans 460–471 (GAKDSPVRRAVK). S464, S475, S479, S483, and S487 each carry phosphoserine. 2 consecutive WW domains span residues 497-530 (SFLPPGWEMRIAPNGRPFFIDHNTKTTTWEDPRL) and 548-581 (GPLPPGWEERIHLDGRTFYIDHNSKITQWEDPRL). The HECT domain occupies 640–974 (RPDVLKARLW…VENAQGFEGV (335 aa)). Catalysis depends on C942, which acts as the Glycyl thioester intermediate.

As to quaternary structure, interacts with UBE2E3. Interacts with NDFIP1; this interaction activates the E3 ubiquitin-protein ligase. Interacts with NDFIP2; this interaction activates the E3 ubiquitin-protein ligase. Interacts (via WW domains) with SCN1A. Interacts (via WW domains) with SCN2A. Interacts (via WW domains) with SCN3A. Interacts (via WW domains) with SCN5A. Interacts (via WW domains) with SCN8A. Interacts (via WW domains) with SCN9A. Interacts (via WW domains) with SCN10A. Interacts (via WW domains) with CLCN5. Interacts with SMAD2. Interacts with SMAD3. Interacts with SMAD6. Interacts with SMAD7. The phosphorylated form interacts with 14-3-3 proteins. Interacts with TNK2. Interacts with WNK1. Interacts with SGK1. Interacts (via C2 domain) with NPC2. Interacts with ARRDC4. Interacts with KCNQ1; promotes internalization of KCNQ1. Interacts (via domains WW1, 3 and 4) with USP36; the interaction inhibits ubiquitination of, at least, NTRK1, KCNQ2 and KCNQ3 by NEDD4L. Interacts with PRRG4 (via cytoplasmic domain). Interacts with LDLRAD3; the interaction is direct. Interacts with UBE2D2. Interacts with TTYH2 and TTYH3. In terms of assembly, (Microbial infection) Interacts with Epstein-Barr virus LMP2A. In terms of processing, phosphorylated by SGK1 or PKA; which impairs interaction with SCNN. Interaction with YWHAH inhibits dephosphorylation. Post-translationally, auto-ubiquitinated. Deubiquitinated by USP36, no effect on NEDD4L protein levels. Both proteins interact and regulate each other's ubiquitination levels. In terms of tissue distribution, ubiquitously expressed, with highest levels in prostate, pancreas, and kidney. Expressed in melanocytes.

The protein localises to the cytoplasm. It localises to the golgi apparatus. The protein resides in the endosome. Its subcellular location is the multivesicular body. It catalyses the reaction S-ubiquitinyl-[E2 ubiquitin-conjugating enzyme]-L-cysteine + [acceptor protein]-L-lysine = [E2 ubiquitin-conjugating enzyme]-L-cysteine + N(6)-ubiquitinyl-[acceptor protein]-L-lysine.. It carries out the reaction [E2 ubiquitin-conjugating enzyme]-S-ubiquitinyl-L-cysteine + [acceptor protein]-L-cysteine = [E2 ubiquitin-conjugating enzyme]-L-cysteine + [acceptor protein]-S-ubiquitinyl-L-cysteine.. The protein operates within protein modification; protein ubiquitination. Activated by NDFIP1- and NDFIP2-binding. Functionally, E3 ubiquitin-protein ligase that mediates the polyubiquitination of lysine and cysteine residues on target proteins and is thereby implicated in the regulation of various signaling pathways including autophagy, innate immunity or DNA repair. Inhibits TGF-beta signaling by triggering SMAD2 and TGFBR1 ubiquitination and proteasome-dependent degradation. Downregulates autophagy and cell growth by ubiquitinating and reducing cellular ULK1 or ASCT2 levels. Promotes ubiquitination and internalization of various plasma membrane channels such as ENaC, SCN2A/Nav1.2, SCN3A/Nav1.3, SCN5A/Nav1.5, SCN9A/Nav1.7, SCN10A/Nav1.8, KCNA3/Kv1.3, KCNH2, EAAT1, KCNQ2/Kv7.2, KCNQ3/Kv7.3 or CLC5. Promotes ubiquitination and degradation of SGK1 and TNK2. Ubiquitinates BRAT1 and this ubiquitination is enhanced in the presence of NDFIP1. Plays a role in dendrite formation by melanocytes. Involved in the regulation of TOR signaling. Ubiquitinates and regulates protein levels of NTRK1 once this one is activated by NGF. Plays a role in antiviral innate immunity by catalyzing 'Lys-29'-linked cysteine ubiquitination of TRAF3, resulting in enhanced 'Lys-48' and 'Lys-63'-linked ubiquitination of TRAF3. Ubiquitinates TTYH2 and TTYH3 and regulates protein levels of TTYH2. This chain is E3 ubiquitin-protein ligase NEDD4-like, found in Homo sapiens (Human).